The following is a 105-amino-acid chain: uncharacterized protein (105 aa).

Over residues 1 to 11 the composition is skewed to basic residues; the sequence is MPHRNDRRKSA. The tract at residues 1 to 20 is disordered; it reads MPHRNDRRKSASKAPNAIIH.

This sequence belongs to the ALB1 family.

The protein localises to the nucleus. It is found in the nucleolus. This is an uncharacterized protein from Schizosaccharomyces pombe (strain 972 / ATCC 24843) (Fission yeast).